Here is a 466-residue protein sequence, read N- to C-terminus: Argininosuccinate lyase (466 aa).

The protein belongs to the lyase 1 family. Argininosuccinate lyase subfamily.

The protein resides in the cytoplasm. It carries out the reaction 2-(N(omega)-L-arginino)succinate = fumarate + L-arginine. Its pathway is amino-acid biosynthesis; L-arginine biosynthesis; L-arginine from L-ornithine and carbamoyl phosphate: step 3/3. This Synechococcus sp. (strain ATCC 27144 / PCC 6301 / SAUG 1402/1) (Anacystis nidulans) protein is Argininosuccinate lyase.